Here is a 350-residue protein sequence, read N- to C-terminus: Guanine nucleotide-binding protein G(t) subunit alpha-1 (350 aa).

A disordered region spans residues 1–21 (MGAGASAEEKHSRELEKKLKE). Glycine 2 carries the N-myristoyl glycine lipid modification. The span at 7 to 21 (AEEKHSRELEKKLKE) shows a compositional bias: basic and acidic residues. One can recognise a G-alpha domain in the interval 28-350 (RTVKLLLLGA…KENLKDCGLF (323 aa)). A G1 motif region spans residues 31–44 (KLLLLGAGESGKST). A GTP-binding site is contributed by 36 to 43 (GAGESGKS). Serine 43 is a Mg(2+) binding site. A Phosphotyrosine modification is found at tyrosine 142. GTP contacts are provided by residues aspartate 146, 171 to 177 (LRSRVKT), glycine 199, 265 to 268 (NKKD), and alanine 322. Residues 169 to 177 (DVLRSRVKT) are G2 motif. Threonine 177 is a Mg(2+) binding site. Residues 192-201 (FRMFDVGGQR) form a G3 motif region. Residues 261 to 268 (VLFLNKKD) form a G4 motif region. The tract at residues 320–325 (TCATDT) is G5 motif. The tract at residues 340 to 350 (IKENLKDCGLF) is interaction with RHO.

This sequence belongs to the G-alpha family. G(i/o/t/z) subfamily. Heterotrimeric G proteins are composed of 3 subunits alpha, beta and gamma. The alpha chain contains the guanine nucleotide binding site. Interacts with RHO. Interacts with RGS9 and PDE6G. Interacts (when myristoylated) with UNC119; interaction is required for localization in sensory neurons. As to expression, in the retina, expressed in the rod photoreceptors.

It is found in the cell projection. Its subcellular location is the cilium. The protein resides in the photoreceptor outer segment. It localises to the membrane. The protein localises to the photoreceptor inner segment. Its function is as follows. Functions as a signal transducer for the rod photoreceptor RHO. Required for normal RHO-mediated light perception by the retina. Guanine nucleotide-binding proteins (G proteins) function as transducers downstream of G protein-coupled receptors (GPCRs), such as the photoreceptor RHO. The alpha chain contains the guanine nucleotide binding site and alternates between an active, GTP-bound state and an inactive, GDP-bound state. Activated RHO promotes GDP release and GTP binding. Signaling is mediated via downstream effector proteins, such as cGMP-phosphodiesterase. The chain is Guanine nucleotide-binding protein G(t) subunit alpha-1 (Gnat1) from Mus musculus (Mouse).